The primary structure comprises 181 residues: MSAARESHPHGVKRSASPDDDLGSSNWEAADLGNEERKQKFLRLMGAGKKEHTGRLVIGDHKSTSHFRTGEEDKKINEELESQYQQSMDSKLSGRYRRHCGLGFSEVEDHDGEGDVAGDDDEDDSPDAESPDDSDSDSESEKEESAEELHAAEHPDDTEDPKSKKDAKSNYKMMFVKSSGS.

The segment at 1–181 (MSAARESHPH…KMMFVKSSGS (181 aa)) is disordered. Lysine 13 participates in a covalent cross-link: Glycyl lysine isopeptide (Lys-Gly) (interchain with G-Cter in SUMO2). Phosphoserine occurs at positions 15 and 17. Over residues 48-78 (GKKEHTGRLVIGDHKSTSHFRTGEEDKKINE) the composition is skewed to basic and acidic residues. Lysine 62 is covalently cross-linked (Glycyl lysine isopeptide (Lys-Gly) (interchain with G-Cter in SUMO2)). Phosphoserine is present on serine 63. Lysine 75 participates in a covalent cross-link: Glycyl lysine isopeptide (Lys-Gly) (interchain with G-Cter in SUMO2). Residues serine 87, serine 125, and serine 145 each carry the phosphoserine modification. Positions 106–146 (EVEDHDGEGDVAGDDDEDDSPDAESPDDSDSDSESEKEESA) are enriched in acidic residues. Over residues 147-169 (EELHAAEHPDDTEDPKSKKDAKS) the composition is skewed to basic and acidic residues. 2 positions are modified to N6-acetyllysine: lysine 172 and lysine 177.

Belongs to the SMAP family.

This is Small acidic protein (Smap) from Mus musculus (Mouse).